We begin with the raw amino-acid sequence, 157 residues long: Small ribosomal subunit protein uS9 (157 aa).

It belongs to the universal ribosomal protein uS9 family.

This is Small ribosomal subunit protein uS9 from Caulobacter vibrioides (strain ATCC 19089 / CIP 103742 / CB 15) (Caulobacter crescentus).